Consider the following 80-residue polypeptide: Translation initiation factor IF-1 (80 aa).

The region spanning 6 to 80 is the S1-like domain; that stretch reads EKRKKEESDV…TSRGRIVYRK (75 aa).

Belongs to the IF-1 family. In terms of assembly, component of the 30S ribosomal translation pre-initiation complex which assembles on the 30S ribosome in the order IF-2 and IF-3, IF-1 and N-formylmethionyl-tRNA(fMet); mRNA recruitment can occur at any time during PIC assembly.

It localises to the cytoplasm. In terms of biological role, one of the essential components for the initiation of protein synthesis. Stabilizes the binding of IF-2 and IF-3 on the 30S subunit to which N-formylmethionyl-tRNA(fMet) subsequently binds. Helps modulate mRNA selection, yielding the 30S pre-initiation complex (PIC). Upon addition of the 50S ribosomal subunit IF-1, IF-2 and IF-3 are released leaving the mature 70S translation initiation complex. This Deinococcus geothermalis (strain DSM 11300 / CIP 105573 / AG-3a) protein is Translation initiation factor IF-1.